A 350-amino-acid polypeptide reads, in one-letter code: Quinolinate phosphoribosyltransferase [decarboxylating] 1 (350 aa).

Residues R141, T172–K174, R196, K206, E239, D266, S298–N300, and S319–A321 contribute to the substrate site.

It belongs to the NadC/ModD family.

It carries out the reaction nicotinate beta-D-ribonucleotide + CO2 + diphosphate = quinolinate + 5-phospho-alpha-D-ribose 1-diphosphate + 2 H(+). It functions in the pathway alkaloid biosynthesis; nicotine biosynthesis. It participates in cofactor biosynthesis; NAD(+) biosynthesis; nicotinate D-ribonucleotide from quinolinate: step 1/1. Involved in the biosynthesis of pyridine alkaloid natural products, leading mainly to the production of anabasine, anatabine, nicotine and nornicotine, effective deterrents against herbivores with antiparasitic and pesticide properties (neurotoxins); nornicotine serves as the precursor in the synthesis of the carcinogen compound N'-nitrosonornicotine (NNN). Involved in the catabolism of quinolinic acid (QA). In Nicotiana glauca (Glaucous tobacco), this protein is Quinolinate phosphoribosyltransferase [decarboxylating] 1.